We begin with the raw amino-acid sequence, 448 residues long: Methylenetetrahydrofolate--tRNA-(uracil-5-)-methyltransferase TrmFO (448 aa).

13–18 (GAGLAG) contributes to the FAD binding site.

The protein belongs to the MnmG family. TrmFO subfamily. The cofactor is FAD.

It localises to the cytoplasm. The catalysed reaction is uridine(54) in tRNA + (6R)-5,10-methylene-5,6,7,8-tetrahydrofolate + NADH + H(+) = 5-methyluridine(54) in tRNA + (6S)-5,6,7,8-tetrahydrofolate + NAD(+). It carries out the reaction uridine(54) in tRNA + (6R)-5,10-methylene-5,6,7,8-tetrahydrofolate + NADPH + H(+) = 5-methyluridine(54) in tRNA + (6S)-5,6,7,8-tetrahydrofolate + NADP(+). Its function is as follows. Catalyzes the folate-dependent formation of 5-methyl-uridine at position 54 (M-5-U54) in all tRNAs. In Streptococcus pyogenes serotype M5 (strain Manfredo), this protein is Methylenetetrahydrofolate--tRNA-(uracil-5-)-methyltransferase TrmFO.